Reading from the N-terminus, the 322-residue chain is Uridylate-specific endoribonuclease EndoU (322 aa).

Residues 25-45 (FVIVGLLITIGILSWHFYEYF) form a helical membrane-spanning segment. Residues 53 to 322 (TPDDVLTLSK…LIGTVYPDSS (270 aa)) enclose the EndoU domain. Active-site residues include His200, His215, and Lys259.

The protein belongs to the ENDOU family. In terms of assembly, monomer. Mn(2+) is required as a cofactor. As to expression, predominantly expressed in head.

It is found in the membrane. The catalysed reaction is a ribonucleotidyl-ribonucleotide-RNA = a 3'-end 2',3'-cyclophospho-ribonucleotide-RNA + a 5'-end dephospho-ribonucleoside-RNA. Functionally, endoribonuclease that cleaves single-stranded RNAs at uridylates and releases products that have 2'-3'-cyclic phosphate termini. Preferentially cleaves single stranded RNA at poly-U sites with CU, UC and AU sites cleaved less efficiently. May target mRNAs encoding proteins involved in lipid metabolism to regulate their expression. Regulates levels of TBPH protein, but not mRNA, by an as yet unknown mechanism. Important for neuronal development or function. This chain is Uridylate-specific endoribonuclease EndoU, found in Drosophila melanogaster (Fruit fly).